A 212-amino-acid polypeptide reads, in one-letter code: Protein DEPP1 (212 aa).

Disordered regions lie at residues E20–D39, Q49–A79, and Q113–R176. Positions Q113–R124 are enriched in basic and acidic residues.

In terms of tissue distribution, expressed in various tissues, including pancreas, placenta, ovary, testis and kidney.

The protein resides in the cytoplasm. It is found in the peroxisome. Its subcellular location is the mitochondrion. In terms of biological role, acts as a critical modulator of FOXO3-induced autophagy via increased cellular ROS. The protein is Protein DEPP1 of Homo sapiens (Human).